Here is a 462-residue protein sequence, read N- to C-terminus: MSLARPNARLLSRTNRVFSSQIRTYSAPGDGVIPPAKKKYVPTSGTYPRGFKVGSAHVGVKASNTRFDDLALITSDTPCAAAAVFTKNKFQAAPVTVSRDLLKERGGQGIRAVIVNSGCANAVTGKGGIEDAKSMAKHTDACFTDSPDSPDSPYRSIVMSTGVIGQRLPIDKITSKIPTAFANLGDTHDHWLGTARAICTTDTFPKLMSKTFKLPSSDREYRIAGMTKGAGMIHPNMATLLGIICTDVPVAYFPLRRILASAANKSFNSISIDGDTSTNDTVAILANGAAGGDLIDTKFHSDFESLKQVITDFSIDLAKLVVRDGEGATKFVTIRVTNARSITDARRIASSIARSPLVKTALYGKDANWGRILCATGYSTARNPAVPEETSVSFVPTDGSEELKLLVNGEPEQVDEARAAKILEAEDLEIKVSVSNTPGKDTWFWTCDFSHEYVTINGDYRT.

Substrate-binding residues include T200, K228, T239, E326, N457, and T462. The active-site Nucleophile is T239.

Belongs to the ArgJ family. In terms of assembly, heterodimer of an alpha and a beta chain. Post-translationally, the alpha and beta chains are autoproteolytically processed from a single precursor protein within the mitochondrion.

The protein resides in the mitochondrion matrix. It carries out the reaction N(2)-acetyl-L-ornithine + L-glutamate = N-acetyl-L-glutamate + L-ornithine. The catalysed reaction is L-glutamate + acetyl-CoA = N-acetyl-L-glutamate + CoA + H(+). It functions in the pathway amino-acid biosynthesis; L-arginine biosynthesis; L-ornithine and N-acetyl-L-glutamate from L-glutamate and N(2)-acetyl-L-ornithine (cyclic): step 1/1. Its pathway is amino-acid biosynthesis; L-arginine biosynthesis; N(2)-acetyl-L-ornithine from L-glutamate: step 1/4. Its function is as follows. Catalyzes two activities which are involved in the cyclic version of arginine biosynthesis: the synthesis of acetylglutamate from glutamate and acetyl-CoA, and of ornithine by transacetylation between acetylornithine and glutamate. The sequence is that of Arginine biosynthesis bifunctional protein ArgJ, mitochondrial from Pyrenophora tritici-repentis (strain Pt-1C-BFP) (Wheat tan spot fungus).